The following is a 107-amino-acid chain: Phosphoribosyl-ATP pyrophosphatase (107 aa).

Belongs to the PRA-PH family.

It is found in the cytoplasm. It catalyses the reaction 1-(5-phospho-beta-D-ribosyl)-ATP + H2O = 1-(5-phospho-beta-D-ribosyl)-5'-AMP + diphosphate + H(+). It functions in the pathway amino-acid biosynthesis; L-histidine biosynthesis; L-histidine from 5-phospho-alpha-D-ribose 1-diphosphate: step 2/9. The chain is Phosphoribosyl-ATP pyrophosphatase from Bacillus thuringiensis (strain Al Hakam).